The primary structure comprises 428 residues: Lipoamide acyltransferase component of branched-chain alpha-keto acid dehydrogenase complex (428 aa).

Residues 3-78 (THVIKMPDIG…AVGGELIRLE (76 aa)) enclose the Lipoyl-binding domain. Lysine 44 is modified (N6-lipoyllysine). Residues 88 to 145 (SPAAATPAAPVAATPEKPKEAPVAAPKAAAEAPRALRDSEAPRQRRQPGERPLASPAV) are disordered. Positions 89–120 (PAAATPAAPVAATPEKPKEAPVAAPKAAAEAP) are enriched in low complexity. Positions 121 to 136 (RALRDSEAPRQRRQPG) are enriched in basic and acidic residues. A Peripheral subunit-binding (PSBD) domain is found at 140–177 (LASPAVRQRARDLGIELQFVQGSGPAGRVLHEDLDAYL). Catalysis depends on residues histidine 400 and aspartate 404.

Belongs to the 2-oxoacid dehydrogenase family. In terms of assembly, forms a 24-polypeptide structural core with octahedral symmetry. The cofactor is (R)-lipoate.

It catalyses the reaction N(6)-[(R)-dihydrolipoyl]-L-lysyl-[protein] + 2-methylpropanoyl-CoA = N(6)-[(R)-S(8)-2-methylpropanoyldihydrolipoyl]-L-lysyl-[protein] + CoA. Its function is as follows. The branched-chain alpha-keto dehydrogenase complex catalyzes the overall conversion of alpha-keto acids to acyl-CoA and CO(2). It contains multiple copies of three enzymatic components: branched-chain alpha-keto acid decarboxylase (E1), lipoamide acyltransferase (E2) and lipoamide dehydrogenase (E3). In Pseudomonas aeruginosa (strain ATCC 15692 / DSM 22644 / CIP 104116 / JCM 14847 / LMG 12228 / 1C / PRS 101 / PAO1), this protein is Lipoamide acyltransferase component of branched-chain alpha-keto acid dehydrogenase complex (bkdB).